The chain runs to 114 residues: Iron-sulfur cluster insertion protein ErpA (114 aa).

Residues cysteine 42, cysteine 106, and cysteine 108 each contribute to the iron-sulfur cluster site.

This sequence belongs to the HesB/IscA family. As to quaternary structure, homodimer. Requires iron-sulfur cluster as cofactor.

In terms of biological role, required for insertion of 4Fe-4S clusters for at least IspG. The sequence is that of Iron-sulfur cluster insertion protein ErpA from Proteus mirabilis (strain HI4320).